The primary structure comprises 179 residues: uncharacterized protein (179 aa).

Residues 1-27 (MKTISKQLSAVIFPFIFSACVSQSASS) constitute a signal peptide (or 24).

This is an uncharacterized protein from Haemophilus influenzae (strain ATCC 51907 / DSM 11121 / KW20 / Rd).